An 83-amino-acid polypeptide reads, in one-letter code: DNA-directed RNA polymerase subunit Rpo5 (83 aa).

It belongs to the archaeal Rpo5/eukaryotic RPB5 RNA polymerase subunit family. As to quaternary structure, part of the RNA polymerase complex.

It localises to the cytoplasm. The enzyme catalyses RNA(n) + a ribonucleoside 5'-triphosphate = RNA(n+1) + diphosphate. Its function is as follows. DNA-dependent RNA polymerase (RNAP) catalyzes the transcription of DNA into RNA using the four ribonucleoside triphosphates as substrates. In Nitrosopumilus maritimus (strain SCM1), this protein is DNA-directed RNA polymerase subunit Rpo5.